A 45-amino-acid polypeptide reads, in one-letter code: U1-ctenitoxin-Pk1a (45 aa).

Cystine bridges form between C3–C16, C10–C25, C15–C34, and C27–C32.

In terms of tissue distribution, expressed by the venom gland.

It is found in the secreted. Functionally, neurotoxin. Causes rapid general flaccid paralysis and death in mice at dose levels of 5 ug per mouse. The protein is U1-ctenitoxin-Pk1a of Phoneutria keyserlingi (Brazilian wandering spider).